Reading from the N-terminus, the 186-residue chain is Dirigent protein 7 (186 aa).

A signal peptide spans 1-21; it reads MAKLILIIVTQILLIAAVVSA. N70, N91, and N126 each carry an N-linked (GlcNAc...) asparagine glycan.

It belongs to the plant dirigent protein family. Homodimer.

It localises to the secreted. The protein localises to the extracellular space. The protein resides in the apoplast. Its function is as follows. Dirigent proteins impart stereoselectivity on the phenoxy radical-coupling reaction, yielding optically active lignans from two molecules of coniferyl alcohol in the biosynthesis of lignans, flavonolignans, and alkaloids and thus plays a central role in plant secondary metabolism. In Arabidopsis thaliana (Mouse-ear cress), this protein is Dirigent protein 7 (DIR7).